We begin with the raw amino-acid sequence, 186 residues long: Ribosome-recycling factor (186 aa).

This sequence belongs to the RRF family.

It localises to the cytoplasm. In terms of biological role, responsible for the release of ribosomes from messenger RNA at the termination of protein biosynthesis. May increase the efficiency of translation by recycling ribosomes from one round of translation to another. This Rickettsia africae (strain ESF-5) protein is Ribosome-recycling factor.